The sequence spans 397 residues: Zinc finger transcription factor family protein 30 (397 aa).

Residues 1-40 are disordered; the sequence is MKLEDDKIHSPTNTEEEGYGSDVEVENGTDISGSKGGSGV. Residues 14–27 are compositionally biased toward acidic residues; it reads TEEEGYGSDVEVEN. 3 consecutive C2H2-type zinc fingers follow at residues 51–74, 78–102, and 107–125; these read FRCSICSKVFCHSSSLSRHRMQAH, YKCTVCRKDISSSESLRTHMFKQHH, and YMCRCCNWAFPDKSLLHIH.

It localises to the nucleus. This is Zinc finger transcription factor family protein 30 (ztf-30) from Caenorhabditis elegans.